A 515-amino-acid polypeptide reads, in one-letter code: Bifunctional purine biosynthesis protein PurH (515 aa).

Residues 1 to 145 (MTKRALISVS…KNHASVTVVV (145 aa)) form the MGS-like domain.

It belongs to the PurH family.

The catalysed reaction is (6R)-10-formyltetrahydrofolate + 5-amino-1-(5-phospho-beta-D-ribosyl)imidazole-4-carboxamide = 5-formamido-1-(5-phospho-D-ribosyl)imidazole-4-carboxamide + (6S)-5,6,7,8-tetrahydrofolate. It catalyses the reaction IMP + H2O = 5-formamido-1-(5-phospho-D-ribosyl)imidazole-4-carboxamide. It functions in the pathway purine metabolism; IMP biosynthesis via de novo pathway; 5-formamido-1-(5-phospho-D-ribosyl)imidazole-4-carboxamide from 5-amino-1-(5-phospho-D-ribosyl)imidazole-4-carboxamide (10-formyl THF route): step 1/1. The protein operates within purine metabolism; IMP biosynthesis via de novo pathway; IMP from 5-formamido-1-(5-phospho-D-ribosyl)imidazole-4-carboxamide: step 1/1. This Streptococcus pyogenes serotype M2 (strain MGAS10270) protein is Bifunctional purine biosynthesis protein PurH.